The primary structure comprises 260 residues: MKPATTSWADEVNADYVDGLPPSKEIIDGDYKHITQYKFNDEGKKIKVVRSFKVERKIVSRAVAKRRTWTKFGDSRQDMPGPNSYTTKVADDILMNYIGSKDFEHAHDHLDGNKPMAKCRICNGDHWSVKCPYKGTSMDIESKAIAAATAAAVGDTNKSGKYVPPFLKDGAKGRERDDSCAVRISNLSESMTEDDLEELVKKIGPFTKMYLAREKTSGLCKGFAYVHFKYRKDAAEAVEVLNGHGYDHLILSVEWSKPQN.

Residues 180-258 (CAVRISNLSE…LILSVEWSKP (79 aa)) enclose the RRM domain.

Belongs to the eIF-3 subunit G family. Component of the eukaryotic translation initiation factor 3 (eIF-3) complex. The eIF-3 complex interacts with pix.

The protein resides in the cytoplasm. In terms of biological role, RNA-binding component of the eukaryotic translation initiation factor 3 (eIF-3) complex, which is involved in protein synthesis of a specialized repertoire of mRNAs and, together with other initiation factors, stimulates binding of mRNA and methionyl-tRNAi to the 40S ribosome. The eIF-3 complex specifically targets and initiates translation of a subset of mRNAs involved in cell proliferation. This subunit can bind 18S rRNA. The protein is Eukaryotic translation initiation factor 3 subunit G-2 of Drosophila grimshawi (Hawaiian fruit fly).